Reading from the N-terminus, the 221-residue chain is Lipoprotein-releasing system ATP-binding protein LolD (221 aa).

The region spanning 6–220 is the ABC transporter domain; sequence LILKNISKHY…YKLKHRLLNI (215 aa). 42-49 provides a ligand contact to ATP; the sequence is GSSGSGKS.

This sequence belongs to the ABC transporter superfamily. Lipoprotein translocase (TC 3.A.1.125) family. In terms of assembly, the complex is composed of two ATP-binding proteins (LolD) and two transmembrane proteins (LolC and LolE).

The protein localises to the cell inner membrane. Functionally, part of the ABC transporter complex LolCDE involved in the translocation of mature outer membrane-directed lipoproteins, from the inner membrane to the periplasmic chaperone, LolA. Responsible for the formation of the LolA-lipoprotein complex in an ATP-dependent manner. This is Lipoprotein-releasing system ATP-binding protein LolD from Rickettsia conorii (strain ATCC VR-613 / Malish 7).